Here is a 228-residue protein sequence, read N- to C-terminus: uncharacterized protein (228 aa).

Positions 5-119 constitute a Response regulatory domain; the sequence is HILIVEDEEK…ELLARIRAAL (115 aa). Aspartate 54 is modified (4-aspartylphosphate). The segment at residues 130–228 is a DNA-binding region (ompR/PhoB-type); the sequence is GTFLTYDDLR…IRGVGYAIKG (99 aa).

Post-translationally, phosphorylated by YkoH.

Its subcellular location is the cytoplasm. Its function is as follows. Probable member of the two-component regulatory system YkoH/YkoG. This is an uncharacterized protein from Bacillus subtilis (strain 168).